A 361-amino-acid polypeptide reads, in one-letter code: Histidinol-phosphate aminotransferase (361 aa).

K223 carries the post-translational modification N6-(pyridoxal phosphate)lysine.

Belongs to the class-II pyridoxal-phosphate-dependent aminotransferase family. Histidinol-phosphate aminotransferase subfamily. As to quaternary structure, homodimer. Pyridoxal 5'-phosphate is required as a cofactor.

It carries out the reaction L-histidinol phosphate + 2-oxoglutarate = 3-(imidazol-4-yl)-2-oxopropyl phosphate + L-glutamate. It participates in amino-acid biosynthesis; L-histidine biosynthesis; L-histidine from 5-phospho-alpha-D-ribose 1-diphosphate: step 7/9. This chain is Histidinol-phosphate aminotransferase, found in Deinococcus radiodurans (strain ATCC 13939 / DSM 20539 / JCM 16871 / CCUG 27074 / LMG 4051 / NBRC 15346 / NCIMB 9279 / VKM B-1422 / R1).